Here is a 194-residue protein sequence, read N- to C-terminus: 7-methyl-GTP pyrophosphatase (194 aa).

The active-site Proton acceptor is D67.

The protein belongs to the Maf family. YceF subfamily. It depends on a divalent metal cation as a cofactor.

Its subcellular location is the cytoplasm. The catalysed reaction is N(7)-methyl-GTP + H2O = N(7)-methyl-GMP + diphosphate + H(+). Functionally, nucleoside triphosphate pyrophosphatase that hydrolyzes 7-methyl-GTP (m(7)GTP). May have a dual role in cell division arrest and in preventing the incorporation of modified nucleotides into cellular nucleic acids. The chain is 7-methyl-GTP pyrophosphatase from Pseudoalteromonas atlantica (strain T6c / ATCC BAA-1087).